A 290-amino-acid chain; its full sequence is Feruloyl esterase D (290 aa).

Positions Met1 to Ala25 are cleaved as a signal peptide. The interval His260–Arg280 is disordered.

Belongs to the serine esterase family.

The protein resides in the secreted. The catalysed reaction is feruloyl-polysaccharide + H2O = ferulate + polysaccharide.. Involved in degradation of plant cell walls. Hydrolyzes the feruloyl-arabinose ester bond in arabinoxylans as well as the feruloyl-galactose and feruloyl-arabinose ester bonds in pectin. Active against methyl esters of ferulate (MFA), sinapate (MSA), caffeate (MCA) and p-coumarate (MpCA). In Neurospora crassa (strain ATCC 24698 / 74-OR23-1A / CBS 708.71 / DSM 1257 / FGSC 987), this protein is Feruloyl esterase D.